The primary structure comprises 274 residues: Exosome complex component Rrp42 (274 aa).

It belongs to the RNase PH family. Rrp42 subfamily. In terms of assembly, component of the archaeal exosome complex. Forms a hexameric ring-like arrangement composed of 3 Rrp41-Rrp42 heterodimers. The hexameric ring associates with a trimer of Rrp4 and/or Csl4 subunits.

Its subcellular location is the cytoplasm. Its function is as follows. Non-catalytic component of the exosome, which is a complex involved in RNA degradation. Contributes to the structuring of the Rrp41 active site. This is Exosome complex component Rrp42 from Pyrococcus abyssi (strain GE5 / Orsay).